Here is a 211-residue protein sequence, read N- to C-terminus: DNA-directed RNA polymerases I, II, and III subunit RPABC1 (211 aa).

Belongs to the archaeal Rpo5/eukaryotic RPB5 RNA polymerase subunit family. Component of the RNA polymerase I (Pol I), RNA polymerase II (Pol II) and RNA polymerase III (Pol III) complexes consisting of at least 13, 12 and 17 subunits, respectively. In RNA Pol II, this subunit is present in 2-fold molar excess over the other subunits.

Its subcellular location is the nucleus. Its function is as follows. DNA-dependent RNA polymerase catalyzes the transcription of DNA into RNA using the four ribonucleoside triphosphates as substrates. Common component of RNA polymerases I, II and III which synthesize ribosomal RNA precursors, mRNA precursors and many functional non-coding RNAs, and small RNAs, such as 5S rRNA and tRNAs, respectively. Pol II is the central component of the basal RNA polymerase II transcription machinery. Pols are composed of mobile elements that move relative to each other. In Pol II, RPB5 is part of the lower jaw surrounding the central large cleft and thought to grab the incoming DNA template. Seems to be the major component in this process. The chain is DNA-directed RNA polymerases I, II, and III subunit RPABC1 (rpb-5) from Caenorhabditis elegans.